The primary structure comprises 207 residues: Protein lin-7 homolog B (207 aa).

The Kinase interacting site signature appears at 1–13 (MAALVEPLGLERD). An L27 domain is found at 10 to 65 (LERDVSRAVELLERLQRSGELPPQKLQALQRVLQSRFCSAIREVYEQLYDTLDITG). In terms of domain architecture, PDZ spans 93–175 (VVELPKTDEG…SVKLVVRYTP (83 aa)). Residues 187–207 (KMRSARRRQQHQSYSSLESRG) are disordered. Residues 197 to 207 (HQSYSSLESRG) are compositionally biased toward polar residues.

It belongs to the lin-7 family. As to quaternary structure, forms a complex with CASK and CASKIN1. Component of the brain-specific heterotrimeric complex (LIN-10-LIN-2-LIN-7 complex) composed of at least APBA1, CASK, and LIN7, which associates with the motor protein KIF17 to transport vesicles along microtubules. Forms a heterotrimeric complex composed of MMP5, LIN7B and PATJ; the N-terminal L27 domain of PALS1 interacts with the L27 domain of PATJ and the C-terminal L27 domain of PALS1 interacts with the L27 domain of LIN7B. Forms a heterotrimeric complex with DLG1 and CASK via their L27 domains. Interacts with DLG4 and GRIN2B as well as CDH1 and CTNNB1, the channels KCNJ12/Kir2.2, KCNJ4/Kir2.3 and probably KCNJ2/Kir2.1 and SLC6A12/BGT-1 via its PDZ domain. The association of LIN7A with cadherin and beta-catenin is calcium-dependent, occurs at synaptic junctions and requires the actin cytoskeleton. Interacts with EGFR, ERBB2, ERBB3 and ERBB4 with both PDZ and KID domains. Associates with KIF17 via APBA1. Interacts with ASIC3. Interacts with TOPK. Interacts with RTKN. Interacts with APBA1. Interacts with MPP7. Interacts with DLG2. Interacts with DLG3.

The protein resides in the cell membrane. It localises to the basolateral cell membrane. Its subcellular location is the cell junction. The protein localises to the postsynaptic density membrane. It is found in the tight junction. Functionally, plays a role in establishing and maintaining the asymmetric distribution of channels and receptors at the plasma membrane of polarized cells. Forms membrane-associated multiprotein complexes that may regulate delivery and recycling of proteins to the correct membrane domains. The tripartite complex composed of LIN7 (LIN7A, LIN7B or LIN7C), CASK and APBA1 associates with the motor protein KIF17 to transport vesicles containing N-methyl-D-aspartate (NMDA) receptor subunit NR2B along microtubules. This complex may have the potential to couple synaptic vesicle exocytosis to cell adhesion in brain. Ensures the proper localization of GRIN2B (subunit 2B of the NMDA receptor) to neuronal postsynaptic density and may function in localizing synaptic vesicles at synapses where it is recruited by beta-catenin and cadherin. Required to localize Kir2 channels, GABA transporter (SLC6A12) and EGFR/ERBB1, ERBB2, ERBB3 and ERBB4 to the basolateral membrane of epithelial cells. May increase the amplitude of ASIC3 acid-evoked currents by stabilizing the channel at the cell surface. This chain is Protein lin-7 homolog B (LIN7B), found in Homo sapiens (Human).